A 1115-amino-acid polypeptide reads, in one-letter code: Scavenger receptor cysteine-rich type 1 protein M130 (1115 aa).

A signal peptide spans 1-46; sequence MDKLRMVLHENSGSADFRRCSAHLSSFTFAVVAVLSACLVTSSLGG. At 47–1044 the chain is on the extracellular side; that stretch reads KDKELRLTGG…ESLHATGRSS (998 aa). SRCR domains follow at residues 51–151, 158–258, 265–365, 372–472, 477–577, 582–682, 718–818, 823–925, and 928–1028; these read LRLT…VTCS, MGLV…VICL, LRVV…VTCS, LRLK…ITCS, PRLV…VVCS, IRLV…VICS, LRLV…VICS, LRLI…ITCA, and IRLQ…VTCS. Cystine bridges form between cysteine 76–cysteine 140, cysteine 89–cysteine 150, cysteine 120–cysteine 130, cysteine 183–cysteine 247, cysteine 196–cysteine 257, cysteine 227–cysteine 237, cysteine 290–cysteine 354, cysteine 303–cysteine 364, cysteine 334–cysteine 344, cysteine 397–cysteine 461, cysteine 410–cysteine 471, cysteine 441–cysteine 451, cysteine 502–cysteine 566, cysteine 515–cysteine 576, cysteine 546–cysteine 556, cysteine 607–cysteine 671, cysteine 620–cysteine 681, cysteine 651–cysteine 661, cysteine 743–cysteine 807, cysteine 756–cysteine 817, cysteine 787–cysteine 797, cysteine 863–cysteine 924, and cysteine 894–cysteine 904. Asparagine 105 carries N-linked (GlcNAc...) asparagine glycosylation. Asparagine 139 carries an N-linked (GlcNAc...) asparagine glycan. N-linked (GlcNAc...) asparagine glycosylation occurs at asparagine 936. 3 disulfide bridges follow: cysteine 953–cysteine 1017, cysteine 966–cysteine 1027, and cysteine 997–cysteine 1007. The helical transmembrane segment at 1045–1065 threads the bilayer; the sequence is FVALAIFGVILLACLIAFLIW. The Cytoplasmic portion of the chain corresponds to 1066 to 1115; that stretch reads TQKRRQRQRLSVFSGGENSVHQIQYREMNSCLKADETDMLNPSGDHSEVQ. Positions 1090-1093 match the Internalization signal motif; that stretch reads YREM.

In terms of assembly, interacts with CSNK2B. A soluble form (sCD163) is produced by proteolytic shedding which can be induced by lipopolysaccharide, phorbol ester and Fc region of immunoglobulin gamma. This cleavage is dependent on protein kinase C and tyrosine kinases and can be blocked by protease inhibitors. The shedding is inhibited by the tissue inhibitor of metalloproteinase TIMP3, and thus probably induced by membrane-bound metalloproteinases ADAMs. In terms of processing, phosphorylated. As to expression, expressed in monocytes and macrophages. Detected only in one population of monocytes (CD163+) which is in advanced maturation stage.

The protein resides in the secreted. It localises to the cell membrane. Its function is as follows. Involved in clearance and endocytosis of hemoglobin/haptoglobin complexes by macrophages and may thereby protect tissues from free hemoglobin-mediated oxidative damage. May play a role in the uptake and recycling of iron, via endocytosis of hemoglobin/haptoglobin and subsequent breakdown of heme. Binds hemoglobin/haptoglobin complexes in a calcium-dependent and pH-dependent manner. Induces a cascade of intracellular signals that involves tyrosine kinase-dependent calcium mobilization, inositol triphosphate production and secretion of IL6 and CSF1. May play a role in the process of infection of porcine monocytes/macrophages by African swine fever virus (ASFV). In case of porcine reproductive and respiratory syndrome virus (PRRSV), serves mediates virion attachment and plays a role in viral entry. Functionally, after shedding, the soluble form (sCD163) may play an anti-inflammatory role. The protein is Scavenger receptor cysteine-rich type 1 protein M130 (CD163) of Sus scrofa (Pig).